Reading from the N-terminus, the 70-residue chain is MKRILIAIVKLYRKYISPMKRVPTCRFTPTCSEYALEALQRYGAIRGSYLAVRRILKCHPFHKGGFDPVP.

It belongs to the UPF0161 family.

It localises to the cell membrane. In terms of biological role, could be involved in insertion of integral membrane proteins into the membrane. The protein is Putative membrane protein insertion efficiency factor of Lachnoclostridium phytofermentans (strain ATCC 700394 / DSM 18823 / ISDg) (Clostridium phytofermentans).